The chain runs to 198 residues: Recombination protein RecR (198 aa).

Residues 57–72 (CSICGNLTDEDPCAIC) form a C4-type zinc finger. A Toprim domain is found at 80–175 (STILIVEDSR…KVTRLARGLA (96 aa)).

Belongs to the RecR family.

Functionally, may play a role in DNA repair. It seems to be involved in an RecBC-independent recombinational process of DNA repair. It may act with RecF and RecO. This chain is Recombination protein RecR, found in Streptococcus gordonii (strain Challis / ATCC 35105 / BCRC 15272 / CH1 / DL1 / V288).